Here is a 411-residue protein sequence, read N- to C-terminus: MSIVVKNNIHWVGQRDWEVRDFHGTEYKTLRGSSYNSYLIREEKNVLIDTVDHKFSREFVQNLRNEIDLADIDYIVINHAEEDHAGALTELMAQIPDTPIYCTANAIDSINGHHHHPEWNFNVVKTGDTLDIGNGKQLIFVETPMLHWPDSMMTYLTGDAVLFSNDAFGQHYCDEHLFNDEVDQTELFEQCQRYYANILTPFSRLVTPKITEILGFNLPVDMIATSHGVVWRDNPTQIVELYLKWAADYQEDRITIFYDTMSNNTRMMADAIAQGIAETDPRVAVDRLSTRLQDAGFEMSLSLKAKWRPDQDALELCREHGREIARQWALAPLPQSTVNTVVKEETSATTTADLGPRMQCSVCQWIYDPAKGEPMQDVAPGTPWSEVPDNFLCPECSLGKDVFDELASEAK.

A zinc metallo-hydrolase region spans residues 30–210; sequence LRGSSYNSYL…PFSRLVTPKI (181 aa). 10 residues coordinate Fe cation: H79, E81, D83, H147, D166, H227, C360, C363, C393, and C396. In terms of domain architecture, Rubredoxin-like spans 355–406; that stretch reads GPRMQCSVCQWIYDPAKGEPMQDVAPGTPWSEVPDNFLCPECSLGKDVFDEL.

It in the N-terminal section; belongs to the zinc metallo-hydrolase group 3 family. Homotetramer. It depends on Fe cation as a cofactor.

The protein localises to the cytoplasm. Its pathway is nitrogen metabolism; nitric oxide reduction. In terms of biological role, anaerobic nitric oxide reductase; uses NADH to detoxify nitric oxide (NO), protecting several 4Fe-4S NO-sensitive enzymes. Has at least 2 reductase partners, only one of which (NorW, flavorubredoxin reductase) has been identified. NO probably binds to the di-iron center. Also able to function as an aerobic oxygen reductase. The sequence is that of Anaerobic nitric oxide reductase flavorubredoxin homolog from Escherichia coli O157:H7.